Reading from the N-terminus, the 189-residue chain is Ras-like protein 1 (189 aa).

10–17 (GAGGVGKS) provides a ligand contact to GTP. Positions 32–40 (YDPTIEDSY) match the Effector region motif. GTP is bound by residues 57–61 (DTAGQ) and 116–119 (NKCD). Position 186 is a cysteine methyl ester (C186). C186 carries the S-geranylgeranyl cysteine lipid modification. Residues 187–189 (KML) constitute a propeptide, removed in mature form.

Belongs to the small GTPase superfamily. Ras family.

It localises to the cell membrane. It carries out the reaction GTP + H2O = GDP + phosphate + H(+). With respect to regulation, alternates between an inactive form bound to GDP and an active form bound to GTP. Activated by a guanine nucleotide-exchange factor (GEF) and inactivated by a GTPase-activating protein (GAP). Ras proteins bind GDP/GTP and possess intrinsic GTPase activity. Plays a role in eye development by regulating cell growth, survival of postmitotic ommatidial cells and differentiation of photoreceptor cells. During larval development, mediates Ptth/tor signaling leading to the production of ecdysone, a hormone required for the initiation of metamorphosis. The chain is Ras-like protein 1 from Drosophila willistoni (Fruit fly).